The primary structure comprises 93 residues: Consomatin G1 (93 aa).

Positions 1-22 are cleaved as a signal peptide; the sequence is MQTAYWVMLMMMVCITAPLPEG. A propeptide spanning residues 23–69 is cleaved from the precursor; that stretch reads GKPNSGIRGLVPNDLTPQHTLRSLISRRQTDVLLDATLLTTPAPEQR. The cysteines at positions 72 and 77 are disulfide-linked. Tryptophan 74 is subject to D-tryptophan. The propeptide occupies 79-93; the sequence is PRPYPWRRRDLNGKR.

Belongs to the conotoxin C superfamily. Consomatin family. Expressed by the venom duct.

The protein localises to the secreted. In terms of biological role, potently activates human somatostatin receptors (SSTR) with a specific activation of SSTR2 (EC(50)=2.6 nM). The protein is Consomatin G1 of Conus geographus (Geography cone).